The following is a 92-amino-acid chain: Large ribosomal subunit protein eL43A (92 aa).

The C4-type zinc-finger motif lies at 39–60 (CSFCGKKTVKRGAAGIWTCSCC). Phosphoserine is present on Ser40.

The protein belongs to the eukaryotic ribosomal protein eL43 family. In terms of assembly, component of the large ribosomal subunit (LSU). Mature yeast ribosomes consist of a small (40S) and a large (60S) subunit. The 40S small subunit contains 1 molecule of ribosomal RNA (18S rRNA) and 33 different proteins (encoded by 57 genes). The large 60S subunit contains 3 rRNA molecules (25S, 5.8S and 5S rRNA) and 46 different proteins (encoded by 81 genes).

It localises to the cytoplasm. Functionally, component of the ribosome, a large ribonucleoprotein complex responsible for the synthesis of proteins in the cell. The small ribosomal subunit (SSU) binds messenger RNAs (mRNAs) and translates the encoded message by selecting cognate aminoacyl-transfer RNA (tRNA) molecules. The large subunit (LSU) contains the ribosomal catalytic site termed the peptidyl transferase center (PTC), which catalyzes the formation of peptide bonds, thereby polymerizing the amino acids delivered by tRNAs into a polypeptide chain. The nascent polypeptides leave the ribosome through a tunnel in the LSU and interact with protein factors that function in enzymatic processing, targeting, and the membrane insertion of nascent chains at the exit of the ribosomal tunnel. The polypeptide is Large ribosomal subunit protein eL43A (Saccharomyces cerevisiae (strain ATCC 204508 / S288c) (Baker's yeast)).